The primary structure comprises 122 residues: Large ribosomal subunit protein uL18 (122 aa).

The protein belongs to the universal ribosomal protein uL18 family. In terms of assembly, part of the 50S ribosomal subunit; part of the 5S rRNA/L5/L18/L25 subcomplex. Contacts the 5S and 23S rRNAs.

Its function is as follows. This is one of the proteins that bind and probably mediate the attachment of the 5S RNA into the large ribosomal subunit, where it forms part of the central protuberance. This is Large ribosomal subunit protein uL18 from Mycobacterium leprae (strain TN).